Consider the following 199-residue polypeptide: Protein-methionine-sulfoxide reductase heme-binding subunit MsrQ (199 aa).

4 helical membrane passes run 10–30 (WLKV…FWAI), 82–102 (LWCF…ELGI), 116–136 (PYLT…LTST), and 153–173 (VVYL…KILS).

This sequence belongs to the MsrQ family. Heterodimer of a catalytic subunit (MsrP) and a heme-binding subunit (MsrQ). FMN serves as cofactor. Heme b is required as a cofactor.

It is found in the cell inner membrane. Its function is as follows. Part of the MsrPQ system that repairs oxidized periplasmic proteins containing methionine sulfoxide residues (Met-O), using respiratory chain electrons. Thus protects these proteins from oxidative-stress damage caused by reactive species of oxygen and chlorine generated by the host defense mechanisms. MsrPQ is essential for the maintenance of envelope integrity under bleach stress, rescuing a wide series of structurally unrelated periplasmic proteins from methionine oxidation, including the primary periplasmic chaperone SurA and the lipoprotein Pal. MsrQ provides electrons for reduction to the reductase catalytic subunit MsrP, using the quinone pool of the respiratory chain. In Salmonella newport (strain SL254), this protein is Protein-methionine-sulfoxide reductase heme-binding subunit MsrQ.